The chain runs to 516 residues: Histone H4 transcription factor (516 aa).

3 consecutive C2H2-type zinc fingers follow at residues 15–39, 127–151, and 167–191; these read LQCE…VTQH, FLCL…VEAH, and VLCG…LRSH. The C2H2-type 4; degenerate zinc finger occupies 197 to 219; that stretch reads VACPTCGGMFANNTKFLDHIRRQ. C2H2-type zinc fingers lie at residues 227 to 249, 253 to 276, 282 to 304, 310 to 335, and 343 to 366; these read FQCS…MRNH, YKCP…RFRH, FKCD…LDTH, YSCD…RKVH, and YRCH…RKKH. An interaction with NPAT region spans residues 371-516; it reads PSGHPRFRYK…AAEEPEVQMV (146 aa). Residues 372-405 form a required for activation of histone H4 transcription and contributes to DNA-binding region; that stretch reads SGHPRFRYKEHEDGYMRLQLVRYESVELTQQLLR. Disordered stretches follow at residues 429–456 and 486–516; these read TVPG…PASQ and PGEP…VQMV. Acidic residues predominate over residues 436–445; sequence PQEEAEEEGG.

In terms of assembly, binds MBD2 and a histone deacetylase complex. Interacts with NPAT. Post-translationally, ubiquitinated. Ubiquitination may lead to proteasome-mediated degradation.

Its subcellular location is the nucleus. Transcriptional repressor that binds to the consensus sequence 5'-CGGACGTT-3' and to the RB1 promoter. Transcriptional activator that promotes histone H4 gene transcription at the G1/S phase transition in conjunction with NPAT. Also activates transcription of the ATM and PRKDC genes. Autoregulates its expression by associating with its own promoter. The polypeptide is Histone H4 transcription factor (HINFP) (Bos taurus (Bovine)).